Here is a 355-residue protein sequence, read N- to C-terminus: Uroporphyrinogen decarboxylase (355 aa).

Residues 27–31, Asp77, Tyr154, Thr209, and His328 each bind substrate; that span reads RQAGR.

This sequence belongs to the uroporphyrinogen decarboxylase family. As to quaternary structure, homodimer.

The protein localises to the cytoplasm. The catalysed reaction is uroporphyrinogen III + 4 H(+) = coproporphyrinogen III + 4 CO2. Its pathway is porphyrin-containing compound metabolism; protoporphyrin-IX biosynthesis; coproporphyrinogen-III from 5-aminolevulinate: step 4/4. Its function is as follows. Catalyzes the decarboxylation of four acetate groups of uroporphyrinogen-III to yield coproporphyrinogen-III. The chain is Uroporphyrinogen decarboxylase from Photobacterium profundum (strain SS9).